A 1950-amino-acid polypeptide reads, in one-letter code: E3 ubiquitin-protein ligase UBR1 (1950 aa).

Zn(2+) is bound by residues His-118, Cys-123, Cys-136, Cys-139, Cys-148, Cys-151, His-157, His-160, His-161, Cys-175, Cys-177, and Cys-189. Residues 121 to 194 (RNCGRKFKIG…SPLHCKAEEQ (74 aa)) form a UBR-type zinc finger. 2 positions are modified to phosphoserine: Ser-296 and Ser-300. A ubiquitin-binding loop region spans residues 678 to 681 (HVLH). Zn(2+) is bound at residue Asp-952. Residues 1165–1200 (KERKRRLAKKHQARLLAKFNNQQTKFMKEHESEFDE) are UBC2-binding region (U2BR). Zn(2+)-binding residues include Cys-1220, Cys-1223, Cys-1295, His-1297, His-1300, Cys-1303, Cys-1320, and Cys-1323. Residues 1220–1324 (CALCQDSSST…SNAFICPLCQ (105 aa)) form an RING-type; atypical zinc finger. The interval 1333–1665 (LCQTSKANTG…YEYCGIIKLI (333 aa)) is cap helical domain (CHD). Zn(2+) is bound by residues Cys-1703, Cys-1706, His-1722, Cys-1727, His-1763, and Asp-1775. Disordered regions lie at residues 1826–1846 (RPRRIPPTDEDDEDMEEGEDG) and 1893–1950 (TLQP…REIW). 2 stretches are compositionally biased toward acidic residues: residues 1833–1846 (TDEDDEDMEEGEDG) and 1934–1950 (DEDDSDDNDDSDEREIW). Residue Ser-1938 is modified to Phosphoserine.

It belongs to the E3 ubiquitin-protein ligase UBR1-like family. As to quaternary structure, interacts with UBC2. Interacts with RPN2, RPT1 and RPT6 from the 26S proteasome.

The enzyme catalyses S-ubiquitinyl-[E2 ubiquitin-conjugating enzyme]-L-cysteine + [acceptor protein]-L-lysine = [E2 ubiquitin-conjugating enzyme]-L-cysteine + N(6)-ubiquitinyl-[acceptor protein]-L-lysine.. The protein operates within protein modification; protein ubiquitination. Its function is as follows. Ubiquitin ligase protein which is a component of the N-end rule pathway. Recognizes and binds to proteins bearing specific N-terminal residues that are destabilizing according to the N-end rule, leading to their ubiquitination and subsequent degradation. Recognizes both type-1 and type-2 N-degrons, containing positively charged amino acids (Arg, Lys and His) and bulky and hydrophobic amino acids, respectively. The chain is E3 ubiquitin-protein ligase UBR1 from Saccharomyces cerevisiae (strain ATCC 204508 / S288c) (Baker's yeast).